A 280-amino-acid polypeptide reads, in one-letter code: tRNA(Ile)-lysidine synthase, plastid (280 aa).

28-33 is an ATP binding site; it reads SAGQDS.

This sequence belongs to the tRNA(Ile)-lysidine synthase family.

The protein localises to the plastid. It carries out the reaction cytidine(34) in tRNA(Ile2) + L-lysine + ATP = lysidine(34) in tRNA(Ile2) + AMP + diphosphate + H(+). In terms of biological role, ligates lysine onto the cytidine present at position 34 of the AUA codon-specific tRNA(Ile) that contains the anticodon CAU, in an ATP-dependent manner. Cytidine is converted to lysidine, thus changing the amino acid specificity of the tRNA from methionine to isoleucine. This Helicosporidium sp. subsp. Simulium jonesii (Green alga) protein is tRNA(Ile)-lysidine synthase, plastid (tilS).